The sequence spans 407 residues: Argininosuccinate synthase (407 aa).

ATP-binding positions include 16–24 and Ala44; that span reads AYSGGLDTS. L-citrulline contacts are provided by Tyr96 and Ser101. Gly126 is a binding site for ATP. Thr128, Asn132, and Asp133 together coordinate L-aspartate. An L-citrulline-binding site is contributed by Asn132. L-citrulline contacts are provided by Arg136, Ser185, Ser194, Glu270, and Tyr282.

This sequence belongs to the argininosuccinate synthase family. Type 1 subfamily. Homotetramer.

Its subcellular location is the cytoplasm. It carries out the reaction L-citrulline + L-aspartate + ATP = 2-(N(omega)-L-arginino)succinate + AMP + diphosphate + H(+). It participates in amino-acid biosynthesis; L-arginine biosynthesis; L-arginine from L-ornithine and carbamoyl phosphate: step 2/3. The polypeptide is Argininosuccinate synthase (Shewanella amazonensis (strain ATCC BAA-1098 / SB2B)).